Here is a 93-residue protein sequence, read N- to C-terminus: Putative ribosomal protein eL43-like (93 aa).

Residues 40-61 (CSFCGKTKMKRRAVKIRHCNSC) form a C4-type zinc finger.

This sequence belongs to the eukaryotic ribosomal protein eL43 family.

This Homo sapiens (Human) protein is Putative ribosomal protein eL43-like (RPL37AP8).